A 240-amino-acid chain; its full sequence is Cysteine-rich venom protein catrin (240 aa).

Positions 1-19 (MIAFIVLPILAAVLQQSSG) are cleaved as a signal peptide. In terms of domain architecture, SCP spans 38-166 (VDLHNFLRRS…KYSYFYVCQY (129 aa)). 8 disulfide bridges follow: Cys-75-Cys-153, Cys-92-Cys-167, Cys-148-Cys-164, Cys-186-Cys-193, Cys-189-Cys-198, Cys-202-Cys-235, Cys-211-Cys-229, and Cys-220-Cys-233. Residues 202–235 (CTKEDKYTNCKSLVQQAGCQDKQMQSDCPAICFC) enclose the ShKT domain.

Belongs to the CRISP family. Expressed by the venom gland.

It localises to the secreted. Functionally, catrin-2 weakly blocks contraction of smooth muscle elicited by high potassium-induced depolarization, but does not block caffeine-stimulated contraction. Catrin-1 has no significant effect. May target voltage-gated calcium channels on smooth muscle. The polypeptide is Cysteine-rich venom protein catrin (Crotalus atrox (Western diamondback rattlesnake)).